The sequence spans 328 residues: Ketol-acid reductoisomerase (NADP(+)) (328 aa).

The KARI N-terminal Rossmann domain maps to 2 to 182; sequence AKIYRDGDAS…GATRAGVIET (181 aa). NADP(+) is bound by residues 25–28, R48, S53, and 83–86; these read YGIQ and DMEQ. Residue H108 is part of the active site. Residue G134 participates in NADP(+) binding. The KARI C-terminal knotted domain occupies 183–328; it reads TFAEETETDL…AEMRKLLFGP (146 aa). Residues D191, E195, E227, and E231 each coordinate Mg(2+). S252 serves as a coordination point for substrate.

The protein belongs to the ketol-acid reductoisomerase family. Requires Mg(2+) as cofactor.

It catalyses the reaction (2R)-2,3-dihydroxy-3-methylbutanoate + NADP(+) = (2S)-2-acetolactate + NADPH + H(+). It carries out the reaction (2R,3R)-2,3-dihydroxy-3-methylpentanoate + NADP(+) = (S)-2-ethyl-2-hydroxy-3-oxobutanoate + NADPH + H(+). The protein operates within amino-acid biosynthesis; L-isoleucine biosynthesis; L-isoleucine from 2-oxobutanoate: step 2/4. It functions in the pathway amino-acid biosynthesis; L-valine biosynthesis; L-valine from pyruvate: step 2/4. Its function is as follows. Involved in the biosynthesis of branched-chain amino acids (BCAA). Catalyzes an alkyl-migration followed by a ketol-acid reduction of (S)-2-acetolactate (S2AL) to yield (R)-2,3-dihydroxy-isovalerate. In the isomerase reaction, S2AL is rearranged via a Mg-dependent methyl migration to produce 3-hydroxy-3-methyl-2-ketobutyrate (HMKB). In the reductase reaction, this 2-ketoacid undergoes a metal-dependent reduction by NADPH to yield (R)-2,3-dihydroxy-isovalerate. This is Ketol-acid reductoisomerase (NADP(+)) from Pyrobaculum calidifontis (strain DSM 21063 / JCM 11548 / VA1).